The chain runs to 119 residues: Large ribosomal subunit protein bL20 (119 aa).

It belongs to the bacterial ribosomal protein bL20 family.

In terms of biological role, binds directly to 23S ribosomal RNA and is necessary for the in vitro assembly process of the 50S ribosomal subunit. It is not involved in the protein synthesizing functions of that subunit. In Gluconacetobacter diazotrophicus (strain ATCC 49037 / DSM 5601 / CCUG 37298 / CIP 103539 / LMG 7603 / PAl5), this protein is Large ribosomal subunit protein bL20.